We begin with the raw amino-acid sequence, 183 residues long: MDIDPYKEFGATVELLSFLPSDFFPSVRDLLDTVSALYREALKSPEHCSPHHTALRQAILCWGELMTLATWVGNNLEDPASRDLVVNYVNTNMGLKIRQLWWFHISCLTFGRETVLEYLVSFGVWIRTPPAYRPPNAPILSTLPETTVVRRRGRSPRRRTPSPRRRRSQSPRRRRSQSRESQC.

Residues 136–183 (NAPILSTLPETTVVRRRGRSPRRRTPSPRRRRSQSPRRRRSQSRESQC) form a disordered region. Positions 149-176 (VRRRGRSPRRRTPSPRRRRSQSPRRRRS) are enriched in basic residues. Phosphoserine; by host is present on residues serine 155, serine 162, and serine 170. Residues 155–161 (SPRRRTP) form a 1; half-length repeat. Residues 155 to 177 (SPRRRTPSPRRRRSQSPRRRRSQ) form a 3 X 8 AA repeats of S-P-R-R-R-[PR]-S-Q region. The short motif at 158 to 175 (RRTPSPRRRRSQSPRRRR) is the Bipartite nuclear localization signal element. A run of 2 repeats spans residues 162–169 (SPRRRRSQ) and 170–177 (SPRRRRSQ). Positions 177 to 183 (QSRESQC) are RNA binding.

The protein belongs to the orthohepadnavirus core antigen family. Homodimerizes, then multimerizes. Interacts with cytosol exposed regions of viral L glycoprotein present in the reticulum-to-Golgi compartment. Interacts with human FLNB. Phosphorylated form interacts with host importin alpha; this interaction depends on the exposure of the NLS, which itself depends upon genome maturation and/or phosphorylation of the capsid protein. Interacts with host NUP153. Phosphorylated by host SRPK1, SRPK2, and maybe protein kinase C or GAPDH. Phosphorylation is critical for pregenomic RNA packaging. Protein kinase C phosphorylation is stimulated by HBx protein and may play a role in transport of the viral genome to the nucleus at the late step during the viral replication cycle.

Its subcellular location is the virion. It localises to the host cytoplasm. Self assembles to form an icosahedral capsid. Most capsids appear to be large particles with an icosahedral symmetry of T=4 and consist of 240 copies of capsid protein, though a fraction forms smaller T=3 particles consisting of 180 capsid proteins. Entering capsids are transported along microtubules to the nucleus. Phosphorylation of the capsid is thought to induce exposure of nuclear localization signal in the C-terminal portion of the capsid protein that allows binding to the nuclear pore complex via the importin (karyopherin-) alpha and beta. Capsids are imported in intact form through the nuclear pore into the nuclear basket, where it probably binds NUP153. Only capsids that contain the mature viral genome can release the viral DNA and capsid protein into the nucleoplasm. Immature capsids get stuck in the basket. Capsids encapsulate the pre-genomic RNA and the P protein. Pre-genomic RNA is reverse-transcribed into DNA while the capsid is still in the cytoplasm. The capsid can then either be directed to the nucleus, providing more genomes for transcription, or bud through the endoplasmic reticulum to provide new virions. In Hepatitis B virus genotype B1 subtype adw (isolate Japan/pJDW233/1988) (HBV-B), this protein is Capsid protein.